Here is a 452-residue protein sequence, read N- to C-terminus: Eukaryotic translation initiation factor 3 subunit E (452 aa).

Polar residues predominate over residues 1–17; it reads MADNTPTTANDLLNDAT. Positions 1 to 23 are disordered; it reads MADNTPTTANDLLNDATQAAAKS. One can recognise a PCI domain in the interval 246–426; the sequence is PFFNHEPARD…GTVVMNHPPS (181 aa).

Belongs to the eIF-3 subunit E family. As to quaternary structure, component of the eukaryotic translation initiation factor 3 (eIF-3) complex.

The protein localises to the cytoplasm. Functionally, component of the eukaryotic translation initiation factor 3 (eIF-3) complex, which is involved in protein synthesis of a specialized repertoire of mRNAs and, together with other initiation factors, stimulates binding of mRNA and methionyl-tRNAi to the 40S ribosome. The eIF-3 complex specifically targets and initiates translation of a subset of mRNAs involved in cell proliferation. The sequence is that of Eukaryotic translation initiation factor 3 subunit E (int6) from Botryotinia fuckeliana (strain B05.10) (Noble rot fungus).